Consider the following 333-residue polypeptide: Glyceraldehyde-3-phosphate dehydrogenase (333 aa).

NAD(+) is bound by residues 11 to 12, Asp-32, and Arg-77; that span reads RI. D-glyceraldehyde 3-phosphate is bound by residues 148–150, Thr-179, 208–209, and Arg-231; these read SCT and TG. Cys-149 (nucleophile) is an active-site residue. Residue Asn-313 coordinates NAD(+).

This sequence belongs to the glyceraldehyde-3-phosphate dehydrogenase family. As to quaternary structure, homotetramer.

The protein localises to the cytoplasm. It carries out the reaction D-glyceraldehyde 3-phosphate + phosphate + NAD(+) = (2R)-3-phospho-glyceroyl phosphate + NADH + H(+). Its pathway is carbohydrate degradation; glycolysis; pyruvate from D-glyceraldehyde 3-phosphate: step 1/5. This Glossina morsitans morsitans (Savannah tsetse fly) protein is Glyceraldehyde-3-phosphate dehydrogenase (Gapdh).